The sequence spans 516 residues: Myocyte-specific enhancer factor 2A homolog (516 aa).

The segment at 1–100 (MGRKKIQITR…KGLNGCESPD (100 aa)) is interaction with hdac9. One can recognise an MADS-box domain in the interval 3–57 (RKKIQITRIMDERNRQVTFTKRKFGLMKKAYELSVLCDCEIALIIFNSSNKLFQY). The mef2-type DNA-binding region spans 58 to 86 (ASTDMDKVLLKYTEYNEPHESRTNSDIVE). The interval 318–339 (PSSKGMMPPLNTQRVTSSQGTQ) is disordered. Positions 327 to 339 (LNTQRVTSSQGTQ) are enriched in polar residues. T343 is modified (phosphothreonine; by NLK). S386 carries the phosphoserine; by NLK modification. Polar residues predominate over residues 420–433 (GSNLSINTNQNINI). Residues 420–516 (GSNLSINTNQ…KRMRMDAWVT (97 aa)) form a disordered region. Residues 465–475 (DSLSSSSSSYD) show a composition bias toward low complexity. Composition is skewed to basic and acidic residues over residues 476-486 (GSDREDVRNDF) and 497-516 (NNEDRDSPSVKRMRMDAWVT).

Belongs to the MEF2 family. Interacts with hdac9 and nlk2. As to expression, restricted to the somitic mesoderm of early embryos. Expressed in the head region of neurula stage embryos and in body muscle (myotomes) of the tadpole. Expressed in all tissues examined in the adult.

The protein resides in the nucleus. Its function is as follows. May regulate muscle-specific transcription in the embryo and may regulate transcription of a variety of cell types in the adult. Binds to the sequence 5'-CTA[TA]4TAR-3'. Acts downstream of nlk2 in anterior neural development, including eye formation. The chain is Myocyte-specific enhancer factor 2A homolog (mef2a) from Xenopus laevis (African clawed frog).